The following is a 410-amino-acid chain: MDKINGLPDDLLVKILSYVPTDIAVSTSILSKRWEFLWMWLPNLDYTSRWCRKPGDVGLRDFIHKNLPLHRAPVIESLRFHSNSPDIKPEDIRRWIEIAVSRHVHDLDIDHFSENENIFLSSFFACKSLVTLKLRSVTLRDIPSMVCLPSLKTLLLDNVSFVEGKSLQELLSICPVLEDLSVYCDDYENTKELTIVVPSLLSLSLYIPDEWLLDGYWIDTPSLEYLKLEDWNSCDHLSLIKNMPKLREAYVDAKCFLPKSVIESITSVKHLTICSKDGYGDGFVFNQLEHLTLCVCRGDSPSLLGQLLKDSPNLRILEISVMEDHVDDVGISLDGWNQPSSVPECLLSSLQIFKWPQYLGRPEDRDIAVYILKNARHLKKTTILADRCERFVTQRRMIKELLQALPARIC.

An F-box domain is found at 1 to 47 (MDKINGLPDDLLVKILSYVPTDIAVSTSILSKRWEFLWMWLPNLDYT). One can recognise an FBD domain in the interval 335 to 385 (GWNQPSSVPECLLSSLQIFKWPQYLGRPEDRDIAVYILKNARHLKKTTILA).

In Arabidopsis thaliana (Mouse-ear cress), this protein is FBD-associated F-box protein At5g38590.